Reading from the N-terminus, the 168-residue chain is MAKCQAVFLLVGALCVLSLAGVANAAENHFKVQGMVYCDTCRIQFMTRISTIMEGATVKLECRNITAGTQTFKAEAVTDKVGQYSIPVNGDFEDDICEIELVKSPNSECSEVSHDVYAKQSAKVSLTSNNGEASDIRSANALGFMRKEPLKECPEVLKELDLYDVKAN.

An N-terminal signal peptide occupies residues 1 to 25 (MAKCQAVFLLVGALCVLSLAGVANA). Cystine bridges form between C38–C109, C41–C153, and C62–C97. N64 is a glycosylation site (N-linked (GlcNAc...) asparagine).

Belongs to the Ole e I family.

Its subcellular location is the secreted. This is Pollen allergen Che a 1 from Chenopodium album (Fat hen).